The following is a 175-amino-acid chain: uncharacterized protein (175 aa).

Residues 1-173 (MYKNIIKLIS…VYKEKYKKLL (173 aa)) form the Macro domain.

It belongs to the MacroD-type family.

This is an uncharacterized protein from Fusobacterium nucleatum subsp. nucleatum (strain ATCC 25586 / DSM 15643 / BCRC 10681 / CIP 101130 / JCM 8532 / KCTC 2640 / LMG 13131 / VPI 4355).